We begin with the raw amino-acid sequence, 117 residues long: Ig heavy chain V-A2 region K-25 (117 aa).

At glutamine 1 the chain carries Pyrrolidone carboxylic acid. The Ig-like domain occupies 1–106; it reads QSVKESEGGL…GLSYLKSSVD (106 aa). Cysteine 21 and cysteine 91 are oxidised to a cystine.

In Oryctolagus cuniculus (Rabbit), this protein is Ig heavy chain V-A2 region K-25.